Here is a 446-residue protein sequence, read N- to C-terminus: Tubulin beta-8 chain (446 aa).

The GTP site is built by glutamine 11, glutamate 69, serine 138, glycine 142, threonine 143, glycine 144, asparagine 204, and asparagine 226. A Mg(2+)-binding site is contributed by glutamate 69. A disordered region spans residues 426–446 (QDATAEDDYDEDDDAAAADEA). Positions 429-446 (TAEDDYDEDDDAAAADEA) are enriched in acidic residues.

The protein belongs to the tubulin family. As to quaternary structure, dimer of alpha and beta chains. A typical microtubule is a hollow water-filled tube with an outer diameter of 25 nm and an inner diameter of 15 nM. Alpha-beta heterodimers associate head-to-tail to form protofilaments running lengthwise along the microtubule wall with the beta-tubulin subunit facing the microtubule plus end conferring a structural polarity. Microtubules usually have 13 protofilaments but different protofilament numbers can be found in some organisms and specialized cells. Requires Mg(2+) as cofactor. As to expression, expressed in anthers.

It is found in the cytoplasm. The protein localises to the cytoskeleton. Functionally, tubulin is the major constituent of microtubules, a cylinder consisting of laterally associated linear protofilaments composed of alpha- and beta-tubulin heterodimers. Microtubules grow by the addition of GTP-tubulin dimers to the microtubule end, where a stabilizing cap forms. Below the cap, tubulin dimers are in GDP-bound state, owing to GTPase activity of alpha-tubulin. The sequence is that of Tubulin beta-8 chain (TUBB8) from Oryza sativa subsp. japonica (Rice).